We begin with the raw amino-acid sequence, 1402 residues long: DNA-directed RNA polymerase subunit beta' (1402 aa).

Residues Cys-73, Cys-75, Cys-88, and Cys-91 each coordinate Zn(2+). Mg(2+) contacts are provided by Asp-464, Asp-466, and Asp-468. 4 residues coordinate Zn(2+): Cys-812, Cys-886, Cys-893, and Cys-896.

It belongs to the RNA polymerase beta' chain family. In terms of assembly, the RNAP catalytic core consists of 2 alpha, 1 beta, 1 beta' and 1 omega subunit. When a sigma factor is associated with the core the holoenzyme is formed, which can initiate transcription. Mg(2+) is required as a cofactor. It depends on Zn(2+) as a cofactor.

The catalysed reaction is RNA(n) + a ribonucleoside 5'-triphosphate = RNA(n+1) + diphosphate. DNA-dependent RNA polymerase catalyzes the transcription of DNA into RNA using the four ribonucleoside triphosphates as substrates. The sequence is that of DNA-directed RNA polymerase subunit beta' from Rhodopseudomonas palustris (strain ATCC BAA-98 / CGA009).